We begin with the raw amino-acid sequence, 511 residues long: Zinc finger CCCH-type with G patch domain-containing protein (511 aa).

Position 1 is an N-acetylmethionine (M1). At S70 the chain carries Phosphoserine. A disordered region spans residues 92 to 129; that stretch reads PGAPCNDSETAPGSEVQPGSTSSALEEEEEDPDLEELS. Positions 98 to 115 are enriched in polar residues; it reads DSETAPGSEVQPGSTSSA. Over residues 116 to 127 the composition is skewed to acidic residues; that stretch reads LEEEEEDPDLEE. A C3H1-type zinc finger spans residues 174 to 200; that stretch reads KSLKPCPFFLEGKCRFKENCRFSHGQV. The tract at residues 266–291 is disordered; the sequence is PPLRTEATESSDSDTGDASDSSYARV. S276 carries the phosphoserine modification. T280 carries the post-translational modification Phosphothreonine. Positions 313-359 constitute a G-patch domain; that stretch reads TRGIGSKLLVKMGYEFGKGLGRHAEGRVEPIHAVVLPRGKSLDQCAE. S353 bears the Phosphoserine mark. 2 disordered regions span residues 363 to 393 and 490 to 511; these read KKTKRGQAGSNRPPKCRRSGSRPEGRPPPRN and AQEADLQRKQRKADTHRKMTEF. The segment covering 491–511 has biased composition (basic and acidic residues); the sequence is QEADLQRKQRKADTHRKMTEF.

In terms of assembly, interacts with CHD4/Mi-2; the interaction is direct.

The protein localises to the nucleus. In terms of biological role, transcription repressor that specifically binds the 5'-GGAG[GA]A[GA]A-3' consensus sequence. Represses transcription by recruiting the chromatin multiprotein complex NuRD to target promoters. Negatively regulates expression of EGFR, a gene involved in cell proliferation, survival and migration. Its ability to repress genes of the EGFR pathway suggest it may act as a tumor suppressor. This chain is Zinc finger CCCH-type with G patch domain-containing protein (Zgpat), found in Mus musculus (Mouse).